The chain runs to 533 residues: Glucose-6-phosphate isomerase (533 aa).

Glutamate 322 serves as the catalytic Proton donor. Catalysis depends on residues histidine 351 and lysine 455.

It belongs to the GPI family.

The protein localises to the cytoplasm. It carries out the reaction alpha-D-glucose 6-phosphate = beta-D-fructose 6-phosphate. Its pathway is carbohydrate biosynthesis; gluconeogenesis. It participates in carbohydrate degradation; glycolysis; D-glyceraldehyde 3-phosphate and glycerone phosphate from D-glucose: step 2/4. Functionally, catalyzes the reversible isomerization of glucose-6-phosphate to fructose-6-phosphate. In Desulfitobacterium hafniense (strain DSM 10664 / DCB-2), this protein is Glucose-6-phosphate isomerase.